We begin with the raw amino-acid sequence, 404 residues long: Transcription factor sem-2 (404 aa).

Residues 93–161 (IKRPMNAFMV…CHMQEYPDYK (69 aa)) constitute a DNA-binding region (HMG box). Disordered regions lie at residues 158–218 (PDYK…QFQN) and 321–359 (HTSP…NSAG). Over residues 177-199 (QQPAQPQAPQQQQAPPRGASPQA) the composition is skewed to low complexity. 2 stretches are compositionally biased toward polar residues: residues 207 to 218 (TDQQSETQQFQN) and 347 to 359 (ASEQ…NSAG).

The protein resides in the nucleus. In terms of biological role, probable transcription factor required for embryogenesis, vulval development and cell fate specification of the postembryonic mesoderm (also known as the M lineage). Specifically, required for the specification of sex myoblast cells and their development into the muscles that are necessary for egg-laying. In addition, may be involved in RME GABAergic motor neuron progenitor cell fate specification. This Caenorhabditis elegans protein is Transcription factor sem-2.